The primary structure comprises 240 residues: RING finger protein 151 (240 aa).

The segment at 20-58 (CSVCHGVLKRPVRLPCSHIFCKKCILRWLARQKTCPCCR) adopts an RING-type zinc-finger fold. The TRAF-type zinc finger occupies 101 to 156 (GHQDSCPFELMVCPNEGCMLRVPRGALDEHRQNCQHGAYHRCSLGCGATLGPVERA).

This is RING finger protein 151 (RNF151) from Bos taurus (Bovine).